We begin with the raw amino-acid sequence, 262 residues long: Hemin import ATP-binding protein HmuV (262 aa).

The ABC transporter domain occupies 2-241 (IRASDISVRL…ETMEAVFGCR (240 aa)). 34–41 (GPNGSGKT) is a binding site for ATP.

The protein belongs to the ABC transporter superfamily. Heme (hemin) importer (TC 3.A.1.14.5) family. In terms of assembly, the complex is composed of two ATP-binding proteins (HmuV), two transmembrane proteins (HmuU) and a solute-binding protein (HmuT).

It is found in the cell inner membrane. Its function is as follows. Part of the ABC transporter complex HmuTUV involved in hemin import. Responsible for energy coupling to the transport system. The protein is Hemin import ATP-binding protein HmuV of Rhizobium meliloti (strain 1021) (Ensifer meliloti).